Reading from the N-terminus, the 194-residue chain is Putative 3-methyladenine DNA glycosylase (194 aa).

This sequence belongs to the DNA glycosylase MPG family.

This chain is Putative 3-methyladenine DNA glycosylase, found in Aeropyrum pernix (strain ATCC 700893 / DSM 11879 / JCM 9820 / NBRC 100138 / K1).